The primary structure comprises 453 residues: Presenilin-like protein At1g08700 (453 aa).

Residues 1 to 8 (MESSILDS) lie on the Cytoplasmic side of the membrane. The helical transmembrane segment at 9–29 (LGVEIIGVMAPVSICMFLVVL) threads the bilayer. Residues 30–68 (LTYSLSVTSDPQIRSAANLIYIENPSDSTTVKLEGSLAN) are Lumenal-facing. The helical transmembrane segment at 69 to 89 (AIVFVVLIAAVTFILVLLFYY) threads the bilayer. Topologically, residues 90–103 (NFTNFLKHYMRFSA) are cytoplasmic. The helical transmembrane segment at 104-124 (FFVLGTMGGAIFLSIIQHFSI) threads the bilayer. Over 125-132 (PVDSITCF) the chain is Lumenal. Residues 133–153 (ILLFNFTILGTLSVFAGGIPI) form a helical membrane-spanning segment. Over 154 to 159 (VLRQCY) the chain is Cytoplasmic. Helical transmembrane passes span 160–180 (MVVM…WTTW) and 181–201 (FILV…GGPL). Residue aspartate 190 is part of the active site. Residues 202-369 (KLLVELASSR…VVDISNRGIK (168 aa)) lie on the Cytoplasmic side of the membrane. 2 disordered regions span residues 226–248 (VSSG…GGGV) and 292–329 (IGNG…DRES). Low complexity predominate over residues 227 to 240 (SSGNQRRNRGSSLR). Serine 296 bears the Phosphoserine mark. Residues 309-320 (PSASEHSTSVGT) are compositionally biased toward polar residues. The chain crosses the membrane as a helical span at residues 370 to 390 (LGLGDFIFYSVLVGRAAMYDL). Aspartate 374 is a catalytic residue. The Lumenal segment spans residues 391–392 (MT). The chain crosses the membrane as a helical span at residues 393-413 (VYACYLAIISGLGCTLILLSV). Over 414-417 (YNRA) the chain is Cytoplasmic. Positions 418-438 (LPALPISIMLGVVFYFLTRLL) form an intramembrane region, helical. The PAL signature appears at 419–421 (PAL). Topologically, residues 439–453 (MEPFVVGVTTNLMMF) are cytoplasmic.

It belongs to the peptidase A22A family. As to quaternary structure, homodimer. Probable component of the gamma-secretase complex, a complex composed of a presenilin homodimer, nicastrin, APH1 and PEN2.

Its subcellular location is the endoplasmic reticulum membrane. The protein resides in the golgi apparatus membrane. Functionally, probable subunit of the gamma-secretase complex, an endoprotease complex that catalyzes the intramembrane cleavage of integral membrane proteins such as Notch receptors. The chain is Presenilin-like protein At1g08700 from Arabidopsis thaliana (Mouse-ear cress).